Here is a 290-residue protein sequence, read N- to C-terminus: Eukaryotic translation initiation factor 3 subunit G (290 aa).

2 disordered regions span residues 1–35 (MSRL…DGTK) and 157–200 (ESTG…GERM). The RRM domain maps to 210–288 (ATLRVTNVSE…LILRVEFAKR (79 aa)).

It belongs to the eIF-3 subunit G family. In terms of assembly, component of the eukaryotic translation initiation factor 3 (eIF-3) complex.

The protein localises to the cytoplasm. Its function is as follows. RNA-binding component of the eukaryotic translation initiation factor 3 (eIF-3) complex, which is involved in protein synthesis of a specialized repertoire of mRNAs and, together with other initiation factors, stimulates binding of mRNA and methionyl-tRNAi to the 40S ribosome. The eIF-3 complex specifically targets and initiates translation of a subset of mRNAs involved in cell proliferation. This subunit can bind 18S rRNA. In Aspergillus clavatus (strain ATCC 1007 / CBS 513.65 / DSM 816 / NCTC 3887 / NRRL 1 / QM 1276 / 107), this protein is Eukaryotic translation initiation factor 3 subunit G (tif35).